The following is a 113-amino-acid chain: Antisense of depressing factor protein 1 (113 aa).

Residues 1 to 11 show a composition bias toward basic residues; that stretch reads MGKCSMKKKGV. Residues 1–35 are disordered; it reads MGKCSMKKKGVGKNVGVGKKVQKKRSISTAERKRT.

Belongs to the ADF1 family.

It localises to the nucleus. Functionally, transcriptional repressor which negatively regulates transcription of FYV5 by binding to the promoter on the sense strand. This Saccharomyces cerevisiae (strain ATCC 204508 / S288c) (Baker's yeast) protein is Antisense of depressing factor protein 1.